Reading from the N-terminus, the 463-residue chain is L-2-hydroxyglutarate dehydrogenase, mitochondrial (463 aa).

The transit peptide at 1–52 (MVPALRYLGSVCGRARGIFPGGFSAAHTPASGKSRLLCQGGRRASTSSFDIV) directs the protein to the mitochondrion. Lys104 and Lys173 each carry N6-acetyllysine.

Belongs to the L2HGDH family. It depends on FAD as a cofactor.

It is found in the mitochondrion. It catalyses the reaction (S)-2-hydroxyglutarate + A = 2-oxoglutarate + AH2. This chain is L-2-hydroxyglutarate dehydrogenase, mitochondrial (L2HGDH), found in Bos taurus (Bovine).